Here is a 171-residue protein sequence, read N- to C-terminus: 3-hydroxydecanoyl-[acyl-carrier-protein] dehydratase (171 aa).

H71 is an active-site residue.

This sequence belongs to the thioester dehydratase family. FabA subfamily. As to quaternary structure, homodimer.

The protein localises to the cytoplasm. The enzyme catalyses a (3R)-hydroxyacyl-[ACP] = a (2E)-enoyl-[ACP] + H2O. It carries out the reaction (3R)-hydroxydecanoyl-[ACP] = (2E)-decenoyl-[ACP] + H2O. It catalyses the reaction (2E)-decenoyl-[ACP] = (3Z)-decenoyl-[ACP]. It functions in the pathway lipid metabolism; fatty acid biosynthesis. Its function is as follows. Necessary for the introduction of cis unsaturation into fatty acids. Catalyzes the dehydration of (3R)-3-hydroxydecanoyl-ACP to E-(2)-decenoyl-ACP and then its isomerization to Z-(3)-decenoyl-ACP. Can catalyze the dehydratase reaction for beta-hydroxyacyl-ACPs with saturated chain lengths up to 16:0, being most active on intermediate chain length. In Hamiltonella defensa subsp. Acyrthosiphon pisum (strain 5AT), this protein is 3-hydroxydecanoyl-[acyl-carrier-protein] dehydratase.